A 451-amino-acid polypeptide reads, in one-letter code: Bifunctional protein GlmU (451 aa).

The pyrophosphorylase stretch occupies residues 1–225 (MSLAVVILAA…EFEIQGVNDR (225 aa)). Residues 8 to 11 (LAAG), Lys22, Gln73, 78 to 79 (GT), 99 to 101 (YGD), Gly135, Glu150, Asn165, and Asn223 each bind UDP-N-acetyl-alpha-D-glucosamine. Asp101 lines the Mg(2+) pocket. Asn223 lines the Mg(2+) pocket. The tract at residues 226-246 (IQLAQLEREWQKHIAEVIMSK) is linker. The segment at 247–451 (GVSVADPSRI…IDTWQRPVKK (205 aa)) is N-acetyltransferase. 2 residues coordinate UDP-N-acetyl-alpha-D-glucosamine: Arg329 and Lys347. His359 serves as the catalytic Proton acceptor. UDP-N-acetyl-alpha-D-glucosamine-binding residues include Tyr362 and Asn373. Acetyl-CoA-binding positions include Ala376, 382–383 (NY), Ser401, Ala419, and Arg436.

It in the N-terminal section; belongs to the N-acetylglucosamine-1-phosphate uridyltransferase family. In the C-terminal section; belongs to the transferase hexapeptide repeat family. In terms of assembly, homotrimer. Mg(2+) serves as cofactor.

The protein localises to the cytoplasm. The enzyme catalyses alpha-D-glucosamine 1-phosphate + acetyl-CoA = N-acetyl-alpha-D-glucosamine 1-phosphate + CoA + H(+). It carries out the reaction N-acetyl-alpha-D-glucosamine 1-phosphate + UTP + H(+) = UDP-N-acetyl-alpha-D-glucosamine + diphosphate. It functions in the pathway nucleotide-sugar biosynthesis; UDP-N-acetyl-alpha-D-glucosamine biosynthesis; N-acetyl-alpha-D-glucosamine 1-phosphate from alpha-D-glucosamine 6-phosphate (route II): step 2/2. The protein operates within nucleotide-sugar biosynthesis; UDP-N-acetyl-alpha-D-glucosamine biosynthesis; UDP-N-acetyl-alpha-D-glucosamine from N-acetyl-alpha-D-glucosamine 1-phosphate: step 1/1. Its pathway is bacterial outer membrane biogenesis; LPS lipid A biosynthesis. Its function is as follows. Catalyzes the last two sequential reactions in the de novo biosynthetic pathway for UDP-N-acetylglucosamine (UDP-GlcNAc). The C-terminal domain catalyzes the transfer of acetyl group from acetyl coenzyme A to glucosamine-1-phosphate (GlcN-1-P) to produce N-acetylglucosamine-1-phosphate (GlcNAc-1-P), which is converted into UDP-GlcNAc by the transfer of uridine 5-monophosphate (from uridine 5-triphosphate), a reaction catalyzed by the N-terminal domain. This is Bifunctional protein GlmU from Francisella philomiragia subsp. philomiragia (strain ATCC 25017 / CCUG 19701 / FSC 153 / O#319-036).